Reading from the N-terminus, the 135-residue chain is Galectin-1 (135 aa).

Alanine 2 is modified (N-acetylalanine). The 132-residue stretch at 4–135 (GLVASNLNLK…DFKIKCVAFD (132 aa)) folds into the Galectin domain. 2 positions are modified to N6-acetyllysine: lysine 13 and lysine 29. Serine 30 carries the phosphoserine; by FAM20C modification. A beta-D-galactoside-binding positions include 45–49 (HFNPR), histidine 53, asparagine 62, and 69–72 (WGTE). Residue lysine 108 is modified to N6-acetyllysine; alternate. The residue at position 108 (lysine 108) is an N6-succinyllysine; alternate. Residue lysine 128 is modified to N6-acetyllysine.

As to quaternary structure, homodimer. Binds LGALS3BP. Interacts with CD2, CD3, CD4, CD6, CD7, CD43, ALCAM and CD45. Interacts with laminin (via poly-N-acetyllactosamine). Interacts with SUSD2. Interacts with cargo receptor TMED10; the interaction mediates the translocation from the cytoplasm into the ERGIC (endoplasmic reticulum-Golgi intermediate compartment) and thereby secretion. Interacts with CD69. As to expression, expressed in placenta, maternal decidua and fetal membranes. Within placenta, expressed in trophoblasts, stromal cells, villous endothelium, syncytiotrophoblast apical membrane and villous stroma. Within fetal membranes, expressed in amnion, chorioamniotic mesenchyma and chorion (at protein level). Expressed in cardiac, smooth, and skeletal muscle, neurons, thymus, kidney and hematopoietic cells.

It is found in the secreted. Its subcellular location is the extracellular space. The protein resides in the extracellular matrix. It localises to the cytoplasm. Its function is as follows. Lectin that binds beta-galactoside and a wide array of complex carbohydrates. Plays a role in regulating apoptosis, cell proliferation and cell differentiation. Inhibits CD45 protein phosphatase activity and therefore the dephosphorylation of Lyn kinase. Strong inducer of T-cell apoptosis. Plays a negative role in Th17 cell differentiation via activation of the receptor CD69. The polypeptide is Galectin-1 (Homo sapiens (Human)).